We begin with the raw amino-acid sequence, 212 residues long: Proteasome subunit beta (212 aa).

The propeptide at 1-11 (MSQEHQDVKTG) is removed in mature form; by autocatalysis. The Nucleophile role is filled by Thr12.

The protein belongs to the peptidase T1B family. In terms of assembly, the 20S proteasome core is composed of 14 alpha and 14 beta subunits that assemble into four stacked heptameric rings, resulting in a barrel-shaped structure. The two inner rings, each composed of seven catalytic beta subunits, are sandwiched by two outer rings, each composed of seven alpha subunits. The catalytic chamber with the active sites is on the inside of the barrel. Has a gated structure, the ends of the cylinder being occluded by the N-termini of the alpha-subunits. Is capped at one or both ends by the proteasome regulatory ATPase, PAN.

The protein localises to the cytoplasm. It carries out the reaction Cleavage of peptide bonds with very broad specificity.. With respect to regulation, the formation of the proteasomal ATPase PAN-20S proteasome complex, via the docking of the C-termini of PAN into the intersubunit pockets in the alpha-rings, triggers opening of the gate for substrate entry. Interconversion between the open-gate and close-gate conformations leads to a dynamic regulation of the 20S proteasome proteolysis activity. In terms of biological role, component of the proteasome core, a large protease complex with broad specificity involved in protein degradation. The sequence is that of Proteasome subunit beta from Methanocorpusculum labreanum (strain ATCC 43576 / DSM 4855 / Z).